The chain runs to 203 residues: uncharacterized protein (203 aa).

The N-terminal stretch at 1–31 (MKKTFVKKAMLTTAAMTSAALLTFGPDAASA) is a signal peptide.

This is an uncharacterized protein from Bacillus subtilis (strain 168).